Reading from the N-terminus, the 106-residue chain is Putative double-stranded DNA mimic protein VP1949 (106 aa).

It belongs to the putative dsDNA mimic protein family.

Its function is as follows. May act as a double-stranded DNA (dsDNA) mimic. Probably regulates the activity of a dsDNA-binding protein. In Vibrio parahaemolyticus serotype O3:K6 (strain RIMD 2210633), this protein is Putative double-stranded DNA mimic protein VP1949.